The sequence spans 497 residues: FAD-linked oxidoreductase fogF (497 aa).

The N-terminal stretch at M1 to A18 is a signal peptide. The region spanning N59–L229 is the FAD-binding PCMH-type domain.

Belongs to the oxygen-dependent FAD-linked oxidoreductase family. It depends on FAD as a cofactor.

It functions in the pathway secondary metabolite biosynthesis. FAD-linked oxidoreductase; part of the gene cluster that mediates the biosynthesis of flavoglaucin and congeners (including aspergin, dihydroauroglaucin and auroglaucin), prenylated salicylaldehyde derivatives carrying a saturated or an unsaturated C-7 side chain. The PKS fogA releases the carboxylic acid (8E,10E,12E)-3,5,7-trihydroxytetradeca-8,10,12-trienoic acid as its product, as well as derivatives with one and two double bonds. FogA is indeed able to reduce the initial triketide, thus being at least partially responsible for the differently saturated heptyl side chains of flavoglaucin congeners. The oxidoreductases fogB, fogC and fogD modify the nascent polyketide in fogA-bound form and, together, fogA, fogB, fogC and fogD are necessary for the formation of the aromatic core and the cyclized PKS products are released as salicyl alcohols. In particular, fogB is responsible for oxidation of a hydroxyl group or reduction of remaining double bond(s) at the C-7 residue whereas fogD is probably involved in the reductive release of the modified PKS products. The cytochrome P450 monooxygenase fogE is then responsible for the hydroxylation at C-3 of the benzene ring. The fogE products are substrates of the prenyltransferase fogH and the prenylated benzyl alcohols are subsequently oxidized by the fogF to produce the final aryl aldehydes flavoglaucin and congeners. The short-chain dehydrogenase fogG does not seem to be involved in the biosynthesis of the prenylated salicylaldehyde derivatives. The sequence is that of FAD-linked oxidoreductase fogF from Aspergillus ruber (strain CBS 135680).